A 2153-amino-acid polypeptide reads, in one-letter code: RNA-directed RNA polymerase L (2153 aa).

Positions 36, 54, 97, 110, and 111 each coordinate Mn(2+). Lys124 acts as the For endonuclease activity in catalysis. Residues 957 to 1143 (TGKSIKFKRK…AINQEMWKSM (187 aa)) form the RdRp catalytic domain. A Mg(2+)-binding site is contributed by Asp1100.

Belongs to the Bunyavirales RNA polymerase family. In terms of assembly, interacts with the viral nucleoprotein. It depends on Mn(2+) as a cofactor. The cofactor is Mg(2+).

The protein localises to the host cytoplasm. It is found in the host perinuclear region. The catalysed reaction is RNA(n) + a ribonucleoside 5'-triphosphate = RNA(n+1) + diphosphate. Its function is as follows. RNA-dependent RNA polymerase, which is responsible for the replication and transcription of the viral RNA genome using antigenomic RNA as an intermediate. During transcription, synthesizes subgenomic RNAs and assures their capping by a cap-snatching mechanism, which involves the endonuclease activity cleaving the host capped pre-mRNAs. These short capped RNAs are then used as primers for viral transcription. Cleaves ssRNA substrates but not DNA. Seems to downregulate the expression of its own and heterologous mRNAs through its endonuclease activity. This chain is RNA-directed RNA polymerase L, found in Abrothrix longipilis (Long-haired grass mouse).